The following is a 523-amino-acid chain: Cytoplasmic dynein 1 light intermediate chain 1 (523 aa).

Residues 1 to 25 (MAAVGRVGSFGSSPPGLSSTYTGGP) form a disordered region. The span at 9-19 (SFGSSPPGLSS) shows a compositional bias: low complexity. 74 to 81 (GEDGAGKT) serves as a coordination point for ATP. Serine 207 is modified (phosphoserine). Residue threonine 213 is modified to Phosphothreonine. Disordered stretches follow at residues 387 to 434 (PPTA…DPNM) and 456 to 523 (TGSP…GEAS). Serine 398 and serine 405 each carry phosphoserine. Threonine 408 is modified (phosphothreonine). A phosphoserine mark is found at serine 412, serine 419, serine 421, and serine 427. Residues 412-421 (SVSSNVASVS) are compositionally biased toward low complexity. Residues 458 to 478 (SPGGPGVSGGSPAGGAGGGSS) are compositionally biased toward gly residues. At serine 487 the chain carries Phosphoserine. The span at 493–503 (LDVHAELDRIT) shows a compositional bias: basic and acidic residues. Low complexity predominate over residues 506–523 (PVTVSPTTPTSPTEGEAS). Serine 510 carries the phosphoserine modification. Threonine 512, threonine 513, and threonine 515 each carry phosphothreonine. Serine 516 is subject to Phosphoserine.

This sequence belongs to the dynein light intermediate chain family. Homodimer. The cytoplasmic dynein 1 complex consists of two catalytic heavy chains (HCs) and a number of non-catalytic subunits presented by intermediate chains (ICs), light intermediate chains (LICs) and light chains (LCs); the composition seems to vary in respect to the IC, LIC and LC composition. The heavy chain homodimer serves as a scaffold for the probable homodimeric assembly of the respective non-catalytic subunits. The ICs and LICs bind directly to the HC dimer and the LCs assemble on the IC dimer. Self-associates. Interacts with DYNC1H1; DYNC1LI1 and DYNC1LI2 bind mutually exclusive to DYNC1H1. Interacts with PCNT. Forms a complex with RAB11FIP3 and RAB11A1; the interaction between DYNC1LI1 and RAB11FIP3 is direct and induces DYNC1LI1 localization onto endosomal membrane; the complex regulates endocytic trafficking. Interacts with RUFY3. As to quaternary structure, (Microbial infection) Interacts with human adenovirus 5 hexon protein; this interaction probably allows virus intracellular transport. Phosphorylated during mitosis but not in interphase.

Its subcellular location is the cytoplasm. It localises to the chromosome. The protein resides in the centromere. It is found in the kinetochore. The protein localises to the cytoskeleton. Its subcellular location is the spindle pole. It localises to the recycling endosome membrane. Its function is as follows. Acts as one of several non-catalytic accessory components of the cytoplasmic dynein 1 complex that are thought to be involved in linking dynein to cargos and to adapter proteins that regulate dynein function. Cytoplasmic dynein 1 acts as a motor for the intracellular retrograde motility of vesicles and organelles along microtubules. May play a role in binding dynein to membranous organelles or chromosomes. Probably involved in the microtubule-dependent transport of pericentrin. Is required for progress through the spindle assembly checkpoint. The phosphorylated form appears to be involved in the selective removal of MAD1L1 and MAD1L2 but not BUB1B from kinetochores. Forms a functional Rab11/RAB11FIP3/dynein complex onto endosomal membrane that regulates the movement of peripheral sorting endosomes (SE) along microtubule tracks toward the microtubule organizing center/centrosome, generating the endosomal recycling compartment (ERC). This is Cytoplasmic dynein 1 light intermediate chain 1 (DYNC1LI1) from Homo sapiens (Human).